Reading from the N-terminus, the 115-residue chain is Large ribosomal subunit protein bL19 (115 aa).

It belongs to the bacterial ribosomal protein bL19 family.

Functionally, this protein is located at the 30S-50S ribosomal subunit interface and may play a role in the structure and function of the aminoacyl-tRNA binding site. This Bacillus licheniformis (strain ATCC 14580 / DSM 13 / JCM 2505 / CCUG 7422 / NBRC 12200 / NCIMB 9375 / NCTC 10341 / NRRL NRS-1264 / Gibson 46) protein is Large ribosomal subunit protein bL19.